A 688-amino-acid polypeptide reads, in one-letter code: Protein sel-1 homolog 2 (688 aa).

The first 18 residues, 1 to 18, serve as a signal peptide directing secretion; the sequence is MNPLALLVEILIIIEVTT. At 19–662 the chain is on the extracellular side; sequence KNTEAERYNR…KWKWLKLDST (644 aa). N34 carries N-linked (GlcNAc...) asparagine glycosylation. Sel1-like repeat units lie at residues 107 to 142, 143 to 178, 179 to 214, 215 to 250, 297 to 333, 334 to 370, 371 to 406, 407 to 442, 443 to 478, 551 to 586, and 588 to 623; these read GDEL…NMGN, LKAM…KEGS, YKAQ…AGGS, MMSQ…DYIA, VQIQ…KAGS, ANAM…SKGN, AIGL…EKGW, PNAQ…QSGQ, PLAI…ELGH, AFAR…DKHH, and AQAM…QTSP. A glycan (N-linked (GlcNAc...) asparagine) is linked at N162. The helical transmembrane segment at 663-683 threads the bilayer; the sequence is VGPYWDLLVIGLIVAMLIFLL. The Cytoplasmic segment spans residues 684-688; sequence RNRHR.

This sequence belongs to the sel-1 family.

It localises to the membrane. The protein localises to the cell projection. The protein resides in the cilium. Its subcellular location is the nucleus speckle. The protein is Protein sel-1 homolog 2 (Sel1l2) of Mus musculus (Mouse).